The chain runs to 270 residues: Hydroxyethylthiazole kinase (270 aa).

M44 is a substrate binding site. Residues R119 and T165 each contribute to the ATP site. G192 contributes to the substrate binding site.

Belongs to the Thz kinase family. It depends on Mg(2+) as a cofactor.

The catalysed reaction is 5-(2-hydroxyethyl)-4-methylthiazole + ATP = 4-methyl-5-(2-phosphooxyethyl)-thiazole + ADP + H(+). It participates in cofactor biosynthesis; thiamine diphosphate biosynthesis; 4-methyl-5-(2-phosphoethyl)-thiazole from 5-(2-hydroxyethyl)-4-methylthiazole: step 1/1. Its function is as follows. Catalyzes the phosphorylation of the hydroxyl group of 4-methyl-5-beta-hydroxyethylthiazole (THZ). The chain is Hydroxyethylthiazole kinase from Corynebacterium efficiens (strain DSM 44549 / YS-314 / AJ 12310 / JCM 11189 / NBRC 100395).